The following is a 432-amino-acid chain: Calcium uptake protein 2, mitochondrial (432 aa).

A mitochondrion-targeting transit peptide spans 1–22 (MAAAAGRSAWLAAWGGRLRRGL). The EF-hand 1 domain occupies 169-204 (KPHSGFHVAFKMLDVDGNEMIERKEFVKLQKIISKQ). The Ca(2+) site is built by Asp182, Asp184, Asn186, Met188, Glu190, and Glu193. Ser202 is modified (phosphoserine). The EF-hand 2; degenerate domain occupies 224–259 (EPGVNTTLQVRFFGKRGEKKLHYKEFRRFMENLQTE). One can recognise an EF-hand 3; degenerate domain in the interval 290–325 (TENKDIYWRNVREKLSVGESISLDEFKSFCHFTTHL). Residues 359–394 (LSDNLLDTVFKIFDLDGDECLSHGEFLGVLKNRMHR) form the EF-hand 4 domain. Positions 372, 374, 376, 378, and 383 each coordinate Ca(2+).

This sequence belongs to the MICU1 family. MICU2 subfamily. In terms of assembly, heterodimer; disulfide-linked; heterodimerizes with MICU1. Component of the uniplex complex, composed of MCU, EMRE/SMDT1, MICU1 and MICU2 in a 4:4:1:1 stoichiometry. Predominantly expressed in stomach, intestine, skeletal muscle, kidney, heart, testis, prostate and uterus.

It is found in the mitochondrion intermembrane space. It localises to the mitochondrion inner membrane. Calcium sensor of the mitochondrial calcium uniporter (MCU) channel, which senses calcium level via its EF-hand domains. MICU1 and MICU2 form a disulfide-linked heterodimer that stimulates and inhibits MCU activity, depending on the concentration of calcium. At low calcium levels, MICU1 occludes the pore of the MCU channel, preventing mitochondrial calcium uptake. At higher calcium levels, calcium-binding to MICU1 and MICU2 induces a conformational change that weakens MCU-MICU1 interactions and moves the MICU1-MICU2 heterodimer away from the pore, allowing calcium permeation through the MCU channel. The sequence is that of Calcium uptake protein 2, mitochondrial from Mus musculus (Mouse).